A 582-amino-acid polypeptide reads, in one-letter code: MHPRYSPAPPPQQQQQMGGPPHQQQGGGGGGGGSMRGPSNAQQLPPQIPRSQNYSNGSSSSAAAAPPTSRSAFPGAPLTASAVALKGALPQRPPAMTSPAAAAAGAALAAGAPYRGAASWTPQGYAPAAAAAAAAVAQQAAYRYTAPLPQPAYAAYTPHTATTPATTTYGQRVPTAASPSNTNSSSSSNTGSQSGTLSTSLSNTTNTNTNMGPNGTVQNQNQQGGEQLSKTNLYIRGLQQGTTDKDLVNMCAQYGTIISTKAILDKTTNKCKGYGFVDFEQPAFAECAVKGLQGKGVQAQMAKQQEQDPTNLYIANLPPHFKETDLEAMLSKYGQVVSTRILRDQQMNSKGVGFARMESREKCEQIIQMFNGNTIPGAKDPLLVKFADGGPKKKNLFKTPDPNARAWRDVSAEGIPVAYDPTMQQNGVSVNVGTPIGVPYSRFSAPQVGGYPVAGSQWIPGYMMTQPITQVDDQTSYSPQYMQMAAAPQLGVTSYKPEAVNQVQPRGISMMVSGDTGVPYGTMMPQLATLQIGNSYISPTYPYYAPPPTIIPTMPMTDSEQASTAASPDEAYTQYPHQAAPK.

Positions 1–12 (MHPRYSPAPPPQ) are enriched in pro residues. Positions 1–73 (MHPRYSPAPP…AAPPTSRSAF (73 aa)) are disordered. Tyr5 bears the Phosphotyrosine mark. The segment covering 13–24 (QQQQMGGPPHQQ) has biased composition (low complexity). Residues 25 to 35 (QGGGGGGGGSM) show a composition bias toward gly residues. Over residues 37 to 57 (GPSNAQQLPPQIPRSQNYSNG) the composition is skewed to polar residues. A compositionally biased stretch (low complexity) spans 58-72 (SSSSAAAAPPTSRSA). Phosphotyrosine occurs at positions 125 and 142. Residues 164-225 (PATTTYGQRV…TVQNQNQQGG (62 aa)) are disordered. Low complexity predominate over residues 178–225 (SPSNTNSSSSSNTGSQSGTLSTSLSNTTNTNTNMGPNGTVQNQNQQGG). 2 consecutive RRM domains span residues 231–304 (TNLY…MAKQ) and 310–389 (TNLY…FADG). The disordered stretch occupies residues 555 to 582 (PMTDSEQASTAASPDEAYTQYPHQAAPK).

Has a role in the perception of gravity. This is Protein alan shepard from Drosophila erecta (Fruit fly).